The chain runs to 501 residues: Probable cysteine desulfurase, mitochondrial (501 aa).

Pyridoxal 5'-phosphate is bound by residues 172–173 (AT), asparagine 252, glutamine 280, and 300–302 (SAH). Residue lysine 303 is modified to N6-(pyridoxal phosphate)lysine. Pyridoxal 5'-phosphate is bound at residue threonine 340. The active-site Cysteine persulfide intermediate is cysteine 425. Cysteine 425 provides a ligand contact to [2Fe-2S] cluster.

Belongs to the class-V pyridoxal-phosphate-dependent aminotransferase family. NifS/IscS subfamily. The cofactor is pyridoxal 5'-phosphate.

It localises to the mitochondrion. The catalysed reaction is (sulfur carrier)-H + L-cysteine = (sulfur carrier)-SH + L-alanine. Functionally, catalyzes the removal of elemental sulfur from cysteine to produce alanine. It supplies the inorganic sulfur for iron-sulfur (Fe-S) clusters. Plays a role in both tRNA-processing and mitochondrial metabolism. Involved in the 2-thio-modification of both 5-carboxymethylaminomethyl-2-thiouridine in mitochondrial tRNAs and 5-methoxycarbonylmethyl-2-thiouridine (mcm5s2U) in cytoplasmic tRNAs. The protein is Probable cysteine desulfurase, mitochondrial of Schizosaccharomyces pombe (strain 972 / ATCC 24843) (Fission yeast).